The chain runs to 117 residues: UPF0102 protein FTN_0424 (117 aa).

This sequence belongs to the UPF0102 family.

The protein is UPF0102 protein FTN_0424 of Francisella tularensis subsp. novicida (strain U112).